The following is a 290-amino-acid chain: Undecaprenyl-diphosphatase (290 aa).

8 helical membrane passes run 1–21 (MFLLELIKGIILGIVEGLTEF), 48–68 (SAFTFKVVIQLGSVFAAAWVF), 101–121 (IHVLVGMVPAGILGFLFDDLI), 125–145 (LFSVPTVLIGLFIGAIYMIIA), 161–181 (INYFQAFVIGISQAIAMWPGF), 202–222 (SDFTFIMSVPIMLAASGLSLL), 231–251 (AHIPFYILGFLAAFIVGLIAI), and 266–286 (FAIYRIVLVIFIAILYFGFGI).

It belongs to the UppP family.

It localises to the cell membrane. It catalyses the reaction di-trans,octa-cis-undecaprenyl diphosphate + H2O = di-trans,octa-cis-undecaprenyl phosphate + phosphate + H(+). Its function is as follows. Catalyzes the dephosphorylation of undecaprenyl diphosphate (UPP). Confers resistance to bacitracin. This Staphylococcus epidermidis (strain ATCC 35984 / DSM 28319 / BCRC 17069 / CCUG 31568 / BM 3577 / RP62A) protein is Undecaprenyl-diphosphatase.